A 353-amino-acid chain; its full sequence is Protein AC18 (353 aa).

Its subcellular location is the host nucleus. It is found in the host cytoplasm. Its function is as follows. May play a role in occlusion-derived virions (ODV) formation and/or regulation of late viral gene expression. The sequence is that of Protein AC18 (DA41) from Autographa californica nuclear polyhedrosis virus (AcMNPV).